The following is a 317-amino-acid chain: Apolipoprotein E (317 aa).

An N-terminal signal peptide occupies residues 1–18 (MKVLWAALLVTFLAGCQA). Repeat copies occupy residues 80-101 (TLMD…EQLS), 102-123 (PVAE…ARLG), 124-145 (ADME…AMLG), 146-167 (QSTE…KRLL), 168-189 (RDAD…EGAE), 190-211 (RGVS…VRAA), 212-233 (TVGS…ERLR), and 234-255 (ARME…EQVA). An 8 X 22 AA approximate tandem repeats region spans residues 80–255 (TLMDETMKEL…RLDEVKEQVA (176 aa)). Methionine sulfoxide is present on methionine 143. Residue serine 147 is modified to Phosphoserine. Residues 158–168 (HLRKLRKRLLR) form an LDL and other lipoprotein receptors binding region. 162–165 (LRKR) lines the heparin pocket. Residues 210–290 (AATVGSLASQ…SWFEPLVEDM (81 aa)) are lipid-binding and lipoprotein association. 229 to 236 (GERLRARM) serves as a coordination point for heparin. Positions 266-317 (QQISLQAEAFQARLKSWFEPLVEDMQRQWAGLVEKVQAAVGASTAPVPIDNH) are homooligomerization. A specificity for association with VLDL region spans residues 278–290 (RLKSWFEPLVEDM).

Belongs to the apolipoprotein A1/A4/E family. Homotetramer. May interact with ABCA1; functionally associated with ABCA1 in the biogenesis of HDLs. May interact with APP/A4 amyloid-beta peptide; the interaction is extremely stable in vitro but its physiological significance is unclear. May interact with MAPT. May interact with MAP2. In the cerebrospinal fluid, interacts with secreted SORL1. Interacts with PMEL; this allows the loading of PMEL luminal fragment on ILVs to induce fibril nucleation. APOE exists as multiple glycosylated and sialylated glycoforms within cells and in plasma. The extent of glycosylation and sialylation are tissue and context specific. Post-translationally, glycated in plasma VLDL. In terms of processing, phosphorylated by FAM20C in the extracellular medium.

Its subcellular location is the secreted. It localises to the extracellular space. It is found in the extracellular matrix. The protein localises to the extracellular vesicle. The protein resides in the endosome. Its subcellular location is the multivesicular body. APOE is an apolipoprotein, a protein associating with lipid particles, that mainly functions in lipoprotein-mediated lipid transport between organs via the plasma and interstitial fluids. APOE is a core component of plasma lipoproteins and is involved in their production, conversion and clearance. Apolipoproteins are amphipathic molecules that interact both with lipids of the lipoprotein particle core and the aqueous environment of the plasma. As such, APOE associates with chylomicrons, chylomicron remnants, very low density lipoproteins (VLDL) and intermediate density lipoproteins (IDL) but shows a preferential binding to high-density lipoproteins (HDL). It also binds a wide range of cellular receptors including the LDL receptor/LDLR, the LDL receptor-related proteins LRP1, LRP2 and LRP8 and the very low-density lipoprotein receptor/VLDLR that mediate the cellular uptake of the APOE-containing lipoprotein particles. Finally, APOE also has a heparin-binding activity and binds heparan-sulfate proteoglycans on the surface of cells, a property that supports the capture and the receptor-mediated uptake of APOE-containing lipoproteins by cells. A main function of APOE is to mediate lipoprotein clearance through the uptake of chylomicrons, VLDLs, and HDLs by hepatocytes. APOE is also involved in the biosynthesis by the liver of VLDLs as well as their uptake by peripheral tissues ensuring the delivery of triglycerides and energy storage in muscle, heart and adipose tissues. By participating in the lipoprotein-mediated distribution of lipids among tissues, APOE plays a critical role in plasma and tissues lipid homeostasis. APOE is also involved in two steps of reverse cholesterol transport, the HDLs-mediated transport of cholesterol from peripheral tissues to the liver, and thereby plays an important role in cholesterol homeostasis. First, it is functionally associated with ABCA1 in the biogenesis of HDLs in tissues. Second, it is enriched in circulating HDLs and mediates their uptake by hepatocytes. APOE also plays an important role in lipid transport in the central nervous system, regulating neuron survival and sprouting. The sequence is that of Apolipoprotein E (APOE) from Macaca fascicularis (Crab-eating macaque).